We begin with the raw amino-acid sequence, 96 residues long: Large ribosomal subunit protein uL23 (96 aa).

The protein belongs to the universal ribosomal protein uL23 family. As to quaternary structure, part of the 50S ribosomal subunit. Contacts protein L29, and trigger factor when it is bound to the ribosome.

In terms of biological role, one of the early assembly proteins it binds 23S rRNA. One of the proteins that surrounds the polypeptide exit tunnel on the outside of the ribosome. Forms the main docking site for trigger factor binding to the ribosome. The polypeptide is Large ribosomal subunit protein uL23 (Caldanaerobacter subterraneus subsp. tengcongensis (strain DSM 15242 / JCM 11007 / NBRC 100824 / MB4) (Thermoanaerobacter tengcongensis)).